Consider the following 305-residue polypeptide: Undecaprenyl-diphosphatase (305 aa).

Transmembrane regions (helical) follow at residues 18 to 38, 55 to 75, 103 to 123, 130 to 150, 187 to 207, 225 to 245, 246 to 266, and 284 to 304; these read GVTELFPVSSLGHAVLVPALV, YLAFIVGLHVATAAALLVFFW, WLIVVGTIPVGLAGLALEQLF, PVPAAAFLLLNGVALYAGEVL, GVLIGAAQILALLPGISRSGI, FSFLLATPIILAAGVYKIPEL, FGPLGAGIGGQVLAGSIASFV, and LTPFAIYCAVAGGASLVWLAL.

Belongs to the UppP family.

It is found in the cell membrane. It catalyses the reaction di-trans,octa-cis-undecaprenyl diphosphate + H2O = di-trans,octa-cis-undecaprenyl phosphate + phosphate + H(+). In terms of biological role, catalyzes the dephosphorylation of undecaprenyl diphosphate (UPP). Confers resistance to bacitracin. The sequence is that of Undecaprenyl-diphosphatase from Mycolicibacterium paratuberculosis (strain ATCC BAA-968 / K-10) (Mycobacterium paratuberculosis).